The primary structure comprises 405 residues: GTPase Obg (405 aa).

Residues methionine 1–valine 159 form the Obg domain. One can recognise an OBG-type G domain in the interval alanine 160 to glutamate 333. Residues glycine 166–serine 173, phenylalanine 191–valine 195, aspartate 213–glycine 216, asparagine 283–aspartate 286, and alanine 314–leucine 316 contribute to the GTP site. The Mg(2+) site is built by serine 173 and threonine 193. Residues tyrosine 371 to threonine 382 are compositionally biased toward basic and acidic residues. A disordered region spans residues tyrosine 371 to proline 405. Positions aspartate 383 to valine 399 are enriched in acidic residues.

It belongs to the TRAFAC class OBG-HflX-like GTPase superfamily. OBG GTPase family. Monomer. Mg(2+) is required as a cofactor.

Its subcellular location is the cytoplasm. In terms of biological role, an essential GTPase which binds GTP, GDP and possibly (p)ppGpp with moderate affinity, with high nucleotide exchange rates and a fairly low GTP hydrolysis rate. Plays a role in control of the cell cycle, stress response, ribosome biogenesis and in those bacteria that undergo differentiation, in morphogenesis control. The sequence is that of GTPase Obg from Psychrobacter cryohalolentis (strain ATCC BAA-1226 / DSM 17306 / VKM B-2378 / K5).